A 123-amino-acid chain; its full sequence is Large ribosomal subunit protein bL12 (123 aa).

This sequence belongs to the bacterial ribosomal protein bL12 family. Homodimer. Part of the ribosomal stalk of the 50S ribosomal subunit. Forms a multimeric L10(L12)X complex, where L10 forms an elongated spine to which 2 to 4 L12 dimers bind in a sequential fashion. Binds GTP-bound translation factors.

Functionally, forms part of the ribosomal stalk which helps the ribosome interact with GTP-bound translation factors. Is thus essential for accurate translation. The protein is Large ribosomal subunit protein bL12 of Aliarcobacter butzleri (strain RM4018) (Arcobacter butzleri).